Here is a 134-residue protein sequence, read N- to C-terminus: DNA-directed RNA polymerase subunit omega (134 aa).

Residues 76 to 102 are disordered; the sequence is EVDEPEPDPASMIAAGGAAAADSEEQD.

This sequence belongs to the RNA polymerase subunit omega family. The RNAP catalytic core consists of 2 alpha, 1 beta, 1 beta' and 1 omega subunit. When a sigma factor is associated with the core the holoenzyme is formed, which can initiate transcription.

The enzyme catalyses RNA(n) + a ribonucleoside 5'-triphosphate = RNA(n+1) + diphosphate. Its function is as follows. Promotes RNA polymerase assembly. Latches the N- and C-terminal regions of the beta' subunit thereby facilitating its interaction with the beta and alpha subunits. The chain is DNA-directed RNA polymerase subunit omega from Rhizobium etli (strain ATCC 51251 / DSM 11541 / JCM 21823 / NBRC 15573 / CFN 42).